We begin with the raw amino-acid sequence, 391 residues long: Nuclear hormone receptor family member nhr-218 (391 aa).

The segment at residues 17 to 93 is a DNA-binding region (nuclear receptor); that stretch reads PIPCQICTYQ…MGMKAEKIQQ (77 aa). NR C4-type zinc fingers lie at residues 20 to 40 and 56 to 76; these read CQIC…CRAC and CKTR…CRLC. The NR LBD domain occupies 146–391; sequence SRNYSDSPLT…DNFCNLFAMK (246 aa).

It belongs to the nuclear hormone receptor family.

Its subcellular location is the nucleus. Its function is as follows. Orphan nuclear receptor. This chain is Nuclear hormone receptor family member nhr-218 (nhr-218), found in Caenorhabditis elegans.